Here is a 328-residue protein sequence, read N- to C-terminus: MAVNGASSSGLIVSFGEMLIDFVPTVSGVSLAEAPGFLKAPGGAPANVAIAVTRLGGRSAFVGKLGDDEFGHMLAGILKTNGVQADGINFDKGARTALAFVTLRADGEREFMFYRNPSADMLLTPAELNLDLIRSAKVFHYGSISLIVEPCRAAHMKAMEVAKEAGALLSYDPNLRLPLWPSAEEAKKQIKSIWDSADVIKVSDVELEFLTGSNKIDDESAMSLWHPNLKLLLVTLGEKGCNYYTKKFHGTVGGFHVKTVDTTGAGDSFVGALLTKIVDDQTILADEARLKEVLRFSCACGAITTTKKGAIPALPTASEALTLLKGGA.

The protein belongs to the carbohydrate kinase PfkB family.

The enzyme catalyses D-fructose + ATP = D-fructose 6-phosphate + ADP + H(+). Its pathway is glycan biosynthesis; starch biosynthesis. May play an important role in maintaining the flux of carbon towards starch formation. This Solanum habrochaites (Wild tomato) protein is Fructokinase-2 (FRK2).